Here is a 251-residue protein sequence, read N- to C-terminus: Coproheme decarboxylase (251 aa).

Residues Arg133, 147-151 (YPMSK), His174, Gln187, and Ser225 each bind Fe-coproporphyrin III. The active site involves Tyr147.

It belongs to the ChdC family. Type 1 subfamily. Fe-coproporphyrin III serves as cofactor.

The catalysed reaction is Fe-coproporphyrin III + 2 H2O2 + 2 H(+) = heme b + 2 CO2 + 4 H2O. It catalyses the reaction Fe-coproporphyrin III + H2O2 + H(+) = harderoheme III + CO2 + 2 H2O. It carries out the reaction harderoheme III + H2O2 + H(+) = heme b + CO2 + 2 H2O. Its pathway is porphyrin-containing compound metabolism; protoheme biosynthesis. Its function is as follows. Involved in coproporphyrin-dependent heme b biosynthesis. Catalyzes the decarboxylation of Fe-coproporphyrin III (coproheme) to heme b (protoheme IX), the last step of the pathway. The reaction occurs in a stepwise manner with a three-propionate intermediate. In Listeria innocua serovar 6a (strain ATCC BAA-680 / CLIP 11262), this protein is Coproheme decarboxylase.